The following is a 509-amino-acid chain: Glutamate--tRNA ligase (509 aa).

Positions 20 to 30 (PSPTGFPHVGT) match the 'HIGH' region motif. Zn(2+) is bound by residues cysteine 117, cysteine 119, cysteine 144, and histidine 146. A 'KMSKS' region motif is present at residues 261–265 (KLSKR). Residue lysine 264 coordinates ATP.

It belongs to the class-I aminoacyl-tRNA synthetase family. Glutamate--tRNA ligase type 1 subfamily. In terms of assembly, monomer. The cofactor is Zn(2+).

It localises to the cytoplasm. It carries out the reaction tRNA(Glu) + L-glutamate + ATP = L-glutamyl-tRNA(Glu) + AMP + diphosphate. Catalyzes the attachment of glutamate to tRNA(Glu) in a two-step reaction: glutamate is first activated by ATP to form Glu-AMP and then transferred to the acceptor end of tRNA(Glu). The chain is Glutamate--tRNA ligase from Psychrobacter cryohalolentis (strain ATCC BAA-1226 / DSM 17306 / VKM B-2378 / K5).